Reading from the N-terminus, the 279-residue chain is DNA repair protein RecO (279 aa).

This sequence belongs to the RecO family.

In terms of biological role, involved in DNA repair and RecF pathway recombination. The chain is DNA repair protein RecO from Thermosynechococcus vestitus (strain NIES-2133 / IAM M-273 / BP-1).